Here is a 364-residue protein sequence, read N- to C-terminus: Histidinol-phosphate aminotransferase (364 aa).

K226 carries the N6-(pyridoxal phosphate)lysine modification.

It belongs to the class-II pyridoxal-phosphate-dependent aminotransferase family. Histidinol-phosphate aminotransferase subfamily. In terms of assembly, homodimer. Requires pyridoxal 5'-phosphate as cofactor.

The catalysed reaction is L-histidinol phosphate + 2-oxoglutarate = 3-(imidazol-4-yl)-2-oxopropyl phosphate + L-glutamate. It participates in amino-acid biosynthesis; L-histidine biosynthesis; L-histidine from 5-phospho-alpha-D-ribose 1-diphosphate: step 7/9. This is Histidinol-phosphate aminotransferase from Campylobacter jejuni subsp. jejuni serotype O:6 (strain 81116 / NCTC 11828).